Reading from the N-terminus, the 162-residue chain is Phenazine biosynthesis protein PhzA2 (162 aa).

It belongs to the PhzA/PhzB family.

Its pathway is antibiotic biosynthesis; phenazine biosynthesis. Involved in the biosynthesis of the antibiotic phenazine, a nitrogen-containing heterocyclic molecule having important roles in virulence, competition and biological control. PhzA2 (operon phzA2B2C2E2F2G2) has a role in the biosynthesis of the phenazine during both planktonic growth and biofilm development, and in host infection during biofilm development. This Pseudomonas aeruginosa (strain ATCC 15692 / DSM 22644 / CIP 104116 / JCM 14847 / LMG 12228 / 1C / PRS 101 / PAO1) protein is Phenazine biosynthesis protein PhzA2.